The primary structure comprises 211 residues: MLSHVEMAPAAGGFKLFGKVIMQCGVSEGTQDKAQGFVVAREKVEPEEEEEEEQRVPAAATSGQRASIKREAADRDEEQRQGGGDAAGQPTQRRLQDSAEARAAAAAPLPCPRCRSRDTKFCYFNNYNVNQPRHFCKACHRYWTAGGALRNVPVGAGRRKNRPLGPLAVAHHNHHHRAAAGFVLGFPNPSSPTSPSPVYTDRWPVTPDRPF.

The tract at residues 37–101 (FVVAREKVEP…QRRLQDSAEA (65 aa)) is disordered. The span at 68–80 (IKREAADRDEEQR) shows a compositional bias: basic and acidic residues. The Dof-type zinc finger occupies 109-163 (LPCPRCRSRDTKFCYFNNYNVNQPRHFCKACHRYWTAGGALRNVPVGAGRRKNRP). Zn(2+) is bound by residues cysteine 111, cysteine 114, cysteine 136, and cysteine 139. Positions 191 to 211 (SPTSPSPVYTDRWPVTPDRPF) are disordered.

The protein resides in the nucleus. In terms of biological role, transcription factor that may transactivate seed storage protein genes in developing seeds. The chain is Dof zinc finger protein 5 from Oryza sativa subsp. japonica (Rice).